A 396-amino-acid chain; its full sequence is Glycerate kinase (396 aa).

It belongs to the glycerate kinase type-2 family.

The protein resides in the cytoplasm. It carries out the reaction (R)-glycerate + ATP = (2R)-3-phosphoglycerate + ADP + H(+). The protein is Glycerate kinase (GLYCTK) of Macaca fascicularis (Crab-eating macaque).